The sequence spans 90 residues: Bombyxin G-1 (90 aa).

The N-terminal stretch at methionine 1 to glycine 19 is a signal peptide. 3 disulfides stabilise this stretch: cysteine 28-cysteine 77, cysteine 40-cysteine 90, and cysteine 76-cysteine 81. Positions asparagine 49–isoleucine 67 are cleaved as a propeptide — c peptide like.

It belongs to the insulin family. As to quaternary structure, heterodimer of a B chain and an A chain linked by two disulfide bonds.

It is found in the secreted. This is Bombyxin G-1 (BBXG1) from Bombyx mori (Silk moth).